Reading from the N-terminus, the 186-residue chain is dTTP/UTP pyrophosphatase (186 aa).

Residue aspartate 67 is the Proton acceptor of the active site.

The protein belongs to the Maf family. YhdE subfamily. A divalent metal cation is required as a cofactor.

Its subcellular location is the cytoplasm. The enzyme catalyses dTTP + H2O = dTMP + diphosphate + H(+). The catalysed reaction is UTP + H2O = UMP + diphosphate + H(+). In terms of biological role, nucleoside triphosphate pyrophosphatase that hydrolyzes dTTP and UTP. May have a dual role in cell division arrest and in preventing the incorporation of modified nucleotides into cellular nucleic acids. The sequence is that of dTTP/UTP pyrophosphatase from Carboxydothermus hydrogenoformans (strain ATCC BAA-161 / DSM 6008 / Z-2901).